Consider the following 505-residue polypeptide: Catalase (505 aa).

The interval 1–25 is disordered; that stretch reads MSQQDKKLTGVFGHPVSDRENSMTA. Active-site residues include His56 and Asn129. Tyr339 provides a ligand contact to heme.

It belongs to the catalase family. In terms of assembly, homodimer. The cofactor is heme.

The enzyme catalyses 2 H2O2 = O2 + 2 H2O. Functionally, decomposes hydrogen peroxide into water and oxygen; serves to protect cells from the toxic effects of hydrogen peroxide. The protein is Catalase (katA) of Staphylococcus aureus.